Reading from the N-terminus, the 226-residue chain is uncharacterized protein (226 aa).

A helical transmembrane segment spans residues 203–225 (FGISDIYTSTLSFGLIISLFYLL).

It is found in the membrane. This is an uncharacterized protein from Acanthamoeba polyphaga (Amoeba).